The sequence spans 240 residues: 4-hydroxy-tetrahydrodipicolinate reductase (240 aa).

Residues 79 to 81 (ATT) and 103 to 106 (SANM) contribute to the NAD(+) site. The active-site Proton donor/acceptor is His-135. Residue His-136 participates in (S)-2,3,4,5-tetrahydrodipicolinate binding. Lys-139 serves as the catalytic Proton donor. 145–146 (GT) is a binding site for (S)-2,3,4,5-tetrahydrodipicolinate.

Belongs to the DapB family.

The protein localises to the cytoplasm. It carries out the reaction (S)-2,3,4,5-tetrahydrodipicolinate + NAD(+) + H2O = (2S,4S)-4-hydroxy-2,3,4,5-tetrahydrodipicolinate + NADH + H(+). It catalyses the reaction (S)-2,3,4,5-tetrahydrodipicolinate + NADP(+) + H2O = (2S,4S)-4-hydroxy-2,3,4,5-tetrahydrodipicolinate + NADPH + H(+). It functions in the pathway amino-acid biosynthesis; L-lysine biosynthesis via DAP pathway; (S)-tetrahydrodipicolinate from L-aspartate: step 4/4. Functionally, catalyzes the conversion of 4-hydroxy-tetrahydrodipicolinate (HTPA) to tetrahydrodipicolinate. In Staphylococcus aureus (strain MRSA252), this protein is 4-hydroxy-tetrahydrodipicolinate reductase.